The primary structure comprises 156 residues: MTWMVKLLRQMISMQSQYGAALGATCLLHYLTTSLSIRFFFHDLTVRKHEVMPLGMDYYYLYAIGKDPSHPEIRGSVRKILEKYKTKADKANCALALEAISEHARSVYEYFGFKTYLVFQFGVGEVNSKGEPDPQGKGFTAYLMLYHKDADTIFHA.

A helical transmembrane segment spans residues 20-42 (AALGATCLLHYLTTSLSIRFFFH).

It is found in the membrane. In Saccharomyces cerevisiae (strain ATCC 204508 / S288c) (Baker's yeast), this protein is Putative increased recombination centers protein 11 (IRC11).